The following is a 585-amino-acid chain: Potassium-transporting ATPase potassium-binding subunit (585 aa).

Transmembrane regions (helical) follow at residues 23 to 43, 85 to 105, 152 to 172, 194 to 214, 275 to 295, 307 to 327, 345 to 365, 367 to 387, 397 to 417, 444 to 464, 502 to 522, and 547 to 567; these read GVII…ILSF, FINL…VIMF, FVIT…SMAF, IFDL…LAGI, VEFV…GIVF, VVMF…FAGV, AIGI…STGA, NAAL…GLLL, GVLN…LMVG, LLVV…SSFV, LDGV…LIIA, and VLLI…IIVL.

It belongs to the KdpA family. In terms of assembly, the system is composed of three essential subunits: KdpA, KdpB and KdpC.

Its subcellular location is the cell membrane. Its function is as follows. Part of the high-affinity ATP-driven potassium transport (or Kdp) system, which catalyzes the hydrolysis of ATP coupled with the electrogenic transport of potassium into the cytoplasm. This subunit binds the extracellular potassium ions and delivers the ions to the membrane domain of KdpB through an intramembrane tunnel. This chain is Potassium-transporting ATPase potassium-binding subunit, found in Thermoplasma acidophilum (strain ATCC 25905 / DSM 1728 / JCM 9062 / NBRC 15155 / AMRC-C165).